Reading from the N-terminus, the 461-residue chain is Demethyllactenocin mycarosyltransferase (461 aa).

The interval 1 to 21 (MAGLRPGAGVPPGTPWPISPG) is disordered.

It belongs to the UDP-glycosyltransferase family.

The enzyme catalyses dTDP-beta-L-mycarose + demethyllactenocin = demethylmacrocin + dTDP + H(+). Functionally, involved in the biosynthesis of mycarose which is a 6-deoxyhexose sugar required during production of the macrolide antibiotic tylosin. Catalyzes the transfer of L-mycarosyl from dTDP-beta-L-mycarose to demethyllactenocin to yield demethylmacrocin. The protein is Demethyllactenocin mycarosyltransferase (tylCV) of Streptomyces fradiae (Streptomyces roseoflavus).